A 136-amino-acid chain; its full sequence is uncharacterized protein (136 aa).

The helical transmembrane segment at 102 to 118 threads the bilayer; the sequence is FVIVFFFFSFSLSISCV.

It is found in the membrane. This is an uncharacterized protein from Saccharomyces cerevisiae (strain ATCC 204508 / S288c) (Baker's yeast).